We begin with the raw amino-acid sequence, 277 residues long: Phosphoenolpyruvate synthase regulatory protein (277 aa).

ADP is bound at residue 157 to 164 (GVSRCGKT).

Belongs to the pyruvate, phosphate/water dikinase regulatory protein family. PSRP subfamily.

The catalysed reaction is [pyruvate, water dikinase] + ADP = [pyruvate, water dikinase]-phosphate + AMP + H(+). The enzyme catalyses [pyruvate, water dikinase]-phosphate + phosphate + H(+) = [pyruvate, water dikinase] + diphosphate. Bifunctional serine/threonine kinase and phosphorylase involved in the regulation of the phosphoenolpyruvate synthase (PEPS) by catalyzing its phosphorylation/dephosphorylation. This is Phosphoenolpyruvate synthase regulatory protein from Escherichia coli O1:K1 / APEC.